The following is a 729-amino-acid chain: Fatty acid oxidation complex subunit alpha (729 aa).

The interval 1-189 is enoyl-CoA hydratase/isomerase; that stretch reads MLYQGESLYL…KVGLVQAVVA (189 aa). Residue Asp296 participates in substrate binding. The segment at 311–729 is 3-hydroxyacyl-CoA dehydrogenase; it reads PVPQQAAVLG…HADVSHGQPA (419 aa). NAD(+) is bound by residues Met324, Asp343, 400–402, Lys407, and Ser429; that span reads VVE. Residue His450 is the For 3-hydroxyacyl-CoA dehydrogenase activity of the active site. Asn453 serves as a coordination point for NAD(+). Substrate is bound by residues Asn500 and Tyr660.

The protein in the N-terminal section; belongs to the enoyl-CoA hydratase/isomerase family. In the C-terminal section; belongs to the 3-hydroxyacyl-CoA dehydrogenase family. In terms of assembly, heterotetramer of two alpha chains (FadB) and two beta chains (FadA).

It catalyses the reaction a (3S)-3-hydroxyacyl-CoA + NAD(+) = a 3-oxoacyl-CoA + NADH + H(+). The catalysed reaction is a (3S)-3-hydroxyacyl-CoA = a (2E)-enoyl-CoA + H2O. The enzyme catalyses a 4-saturated-(3S)-3-hydroxyacyl-CoA = a (3E)-enoyl-CoA + H2O. It carries out the reaction (3S)-3-hydroxybutanoyl-CoA = (3R)-3-hydroxybutanoyl-CoA. It catalyses the reaction a (3Z)-enoyl-CoA = a 4-saturated (2E)-enoyl-CoA. The catalysed reaction is a (3E)-enoyl-CoA = a 4-saturated (2E)-enoyl-CoA. Its pathway is lipid metabolism; fatty acid beta-oxidation. In terms of biological role, involved in the aerobic and anaerobic degradation of long-chain fatty acids via beta-oxidation cycle. Catalyzes the formation of 3-oxoacyl-CoA from enoyl-CoA via L-3-hydroxyacyl-CoA. It can also use D-3-hydroxyacyl-CoA and cis-3-enoyl-CoA as substrate. In Pectobacterium atrosepticum (strain SCRI 1043 / ATCC BAA-672) (Erwinia carotovora subsp. atroseptica), this protein is Fatty acid oxidation complex subunit alpha.